A 394-amino-acid chain; its full sequence is Elongation factor Tu 2 (394 aa).

Residues 10–204 form the tr-type G domain; that stretch reads KPHVNVGTIG…ALDSYIPEPE (195 aa). A G1 region spans residues 19–26; sequence GHVDHGKT. 19-26 contributes to the GTP binding site; sequence GHVDHGKT. T26 provides a ligand contact to Mg(2+). The G2 stretch occupies residues 60–64; sequence GITIS. A G3 region spans residues 81–84; that stretch reads DCPG. Residues 81 to 85 and 136 to 139 contribute to the GTP site; these read DCPGH and NKCD. The tract at residues 136–139 is G4; the sequence is NKCD. A G5 region spans residues 174–176; it reads SAL.

The protein belongs to the TRAFAC class translation factor GTPase superfamily. Classic translation factor GTPase family. EF-Tu/EF-1A subfamily. Monomer.

The protein resides in the cytoplasm. It carries out the reaction GTP + H2O = GDP + phosphate + H(+). In terms of biological role, GTP hydrolase that promotes the GTP-dependent binding of aminoacyl-tRNA to the A-site of ribosomes during protein biosynthesis. The protein is Elongation factor Tu 2 of Photorhabdus laumondii subsp. laumondii (strain DSM 15139 / CIP 105565 / TT01) (Photorhabdus luminescens subsp. laumondii).